We begin with the raw amino-acid sequence, 491 residues long: Trypanothione reductase (491 aa).

Residue 35-52 (DVQATHGPPALVALGGTC) coordinates FAD. Cys-52 and Cys-57 are oxidised to a cystine. The active-site Proton acceptor is the His-461.

Belongs to the class-I pyridine nucleotide-disulfide oxidoreductase family. As to quaternary structure, homodimer. FAD serves as cofactor.

It is found in the cytoplasm. The enzyme catalyses trypanothione + NADP(+) = trypanothione disulfide + NADPH + H(+). Trypanothione is the parasite analog of glutathione; this enzyme is the equivalent of glutathione reductase. This Leishmania donovani protein is Trypanothione reductase (TPR).